We begin with the raw amino-acid sequence, 272 residues long: Phosphoglycolate phosphatase 1 (272 aa).

D19 acts as the Nucleophile in catalysis. D19, D21, and D182 together coordinate Mg(2+).

This sequence belongs to the HAD-like hydrolase superfamily. CbbY/CbbZ/Gph/YieH family. It depends on Mg(2+) as a cofactor.

It carries out the reaction 2-phosphoglycolate + H2O = glycolate + phosphate. Its pathway is organic acid metabolism; glycolate biosynthesis; glycolate from 2-phosphoglycolate: step 1/1. Its function is as follows. Specifically catalyzes the dephosphorylation of 2-phosphoglycolate. Is involved in the dissimilation of the intracellular 2-phosphoglycolate formed during the DNA repair of 3'-phosphoglycolate ends, a major class of DNA lesions induced by oxidative stress. This is Phosphoglycolate phosphatase 1 from Pseudomonas aeruginosa (strain ATCC 15692 / DSM 22644 / CIP 104116 / JCM 14847 / LMG 12228 / 1C / PRS 101 / PAO1).